Reading from the N-terminus, the 128-residue chain is uncharacterized protein (128 aa).

This is an uncharacterized protein from Homo sapiens (Human).